Consider the following 302-residue polypeptide: ICOS ligand (302 aa).

An N-terminal signal peptide occupies residues 1–18 (MRLGSPGLLFLLFSSLRA). Residues 19–129 (DTQEKEVRAM…LGFQEVLSVE (111 aa)) enclose the Ig-like V-type domain. The Extracellular portion of the chain corresponds to 19–256 (DTQEKEVRAM…VSTGEKNAAT (238 aa)). Cysteine 37 and cysteine 113 are oxidised to a cystine. 5 N-linked (GlcNAc...) asparagine glycosylation sites follow: asparagine 70, asparagine 137, asparagine 173, asparagine 186, and asparagine 225. The Ig-like C2-type domain maps to 141 to 227 (PVVSAPHSPS…ENVLLQQNLT (87 aa)). Cysteine 158 and cysteine 216 are joined by a disulfide. Residues 257-277 (WSILAVLCLLVVVAVAIGWVC) form a helical membrane-spanning segment. The Cytoplasmic segment spans residues 278–302 (RDRCLQHSYAGAWAVSPETELTGHV).

This sequence belongs to the immunoglobulin superfamily. BTN/MOG family. Interacts with CTLA4 (in vitro). Expressed on peripheral blood B-cells and monocytes, as well as on monocyte-derived dendritic cells (at protein level). In terms of tissue distribution, widely expressed (brain, heart, kidney, liver, lung, pancreas, placenta, skeletal muscle, bone marrow, colon, ovary, prostate, testis, lymph nodes, leukocytes, spleen, thymus and tonsil). As to expression, detected only in lymph nodes, leukocytes and spleen. Expressed on activated monocytes and dendritic cells.

The protein resides in the cell membrane. In terms of biological role, ligand for the T-cell-specific cell surface receptor ICOS. Acts as a costimulatory signal for T-cell proliferation and cytokine secretion. Also induces B-cell proliferation and differentiation into plasma cells. Could play an important role in mediating local tissue responses to inflammatory conditions, as well as in modulating the secondary immune response by co-stimulating memory T-cell function. In endothelial cells, required for proper neutrophil transmigration in response to chemoattractants, such as CXCL8/IL8 or N-formyl-methionyl peptides (fMLP). The polypeptide is ICOS ligand (ICOSLG) (Homo sapiens (Human)).